We begin with the raw amino-acid sequence, 184 residues long: Large ribosomal subunit protein bL17 (184 aa).

Positions 126 to 184 are disordered; it reads TRAARAAASKQTADEAQVEETPAEEVTEETAAEETTEAAQADEAPAEEAPVEEKKDEEK. Residues 141-161 show a composition bias toward acidic residues; that stretch reads AQVEETPAEEVTEETAAEETT.

This sequence belongs to the bacterial ribosomal protein bL17 family. In terms of assembly, part of the 50S ribosomal subunit. Contacts protein L32.

The chain is Large ribosomal subunit protein bL17 from Corynebacterium efficiens (strain DSM 44549 / YS-314 / AJ 12310 / JCM 11189 / NBRC 100395).